The chain runs to 529 residues: Beta-glucosidase 11 (529 aa).

A signal peptide spans Met1–Ala25. A beta-D-glucoside is bound by residues Gln54, His157, and Asn202 to Glu203. Glu203 serves as the catalytic Proton donor. Cys222 and Cys230 are oxidised to a cystine. Tyr346 lines the a beta-D-glucoside pocket. A glycan (N-linked (GlcNAc...) asparagine) is linked at Asn361. Glu417 lines the a beta-D-glucoside pocket. Glu417 serves as the catalytic Nucleophile. N-linked (GlcNAc...) asparagine glycosylation occurs at Asn425. A beta-D-glucoside-binding positions include Trp466, Glu473–Trp474, and Phe482.

It belongs to the glycosyl hydrolase 1 family.

It carries out the reaction Hydrolysis of terminal, non-reducing beta-D-glucosyl residues with release of beta-D-glucose.. The polypeptide is Beta-glucosidase 11 (BGLU11) (Oryza sativa subsp. japonica (Rice)).